A 156-amino-acid chain; its full sequence is Small ribosomal subunit protein bS16 (156 aa).

A compositionally biased stretch (low complexity) spans 124–135 (AAKAAEAETPAE). Residues 124–156 (AAKAAEAETPAEVQHDDEKVELADVEESAPESV) are disordered. Basic and acidic residues predominate over residues 136 to 145 (VQHDDEKVEL). A compositionally biased stretch (acidic residues) spans 146-156 (ADVEESAPESV).

Belongs to the bacterial ribosomal protein bS16 family.

The sequence is that of Small ribosomal subunit protein bS16 from Bifidobacterium animalis subsp. lactis (strain AD011).